The sequence spans 251 residues: DNA repair protein RecO (251 aa).

Belongs to the RecO family.

In terms of biological role, involved in DNA repair and RecF pathway recombination. In Staphylococcus saprophyticus subsp. saprophyticus (strain ATCC 15305 / DSM 20229 / NCIMB 8711 / NCTC 7292 / S-41), this protein is DNA repair protein RecO.